The following is a 314-amino-acid chain: 2,3-dihydroxyphenylpropionate/2,3-dihydroxicinnamic acid 1,2-dioxygenase (314 aa).

Catalysis depends on H115, which acts as the Proton donor. H179 (proton acceptor) is an active-site residue.

This sequence belongs to the LigB/MhpB extradiol dioxygenase family. In terms of assembly, homotetramer. It depends on Fe(2+) as a cofactor.

It carries out the reaction 3-(2,3-dihydroxyphenyl)propanoate + O2 = (2Z,4E)-2-hydroxy-6-oxonona-2,4-dienedioate + H(+). The enzyme catalyses (2E)-3-(2,3-dihydroxyphenyl)prop-2-enoate + O2 = (2Z,4E,7E)-2-hydroxy-6-oxonona-2,4,7-trienedioate + H(+). The protein operates within aromatic compound metabolism; 3-phenylpropanoate degradation. In terms of biological role, catalyzes the non-heme iron(II)-dependent oxidative cleavage of 2,3-dihydroxyphenylpropionic acid and 2,3-dihydroxicinnamic acid into 2-hydroxy-6-ketononadienedioate and 2-hydroxy-6-ketononatrienedioate, respectively. This chain is 2,3-dihydroxyphenylpropionate/2,3-dihydroxicinnamic acid 1,2-dioxygenase, found in Cupriavidus pinatubonensis (strain JMP 134 / LMG 1197) (Cupriavidus necator (strain JMP 134)).